A 553-amino-acid polypeptide reads, in one-letter code: Putative transport protein YidE (553 aa).

5 helical membrane passes run 4–24 (IALT…IGNV), 28–48 (GIGL…HFVS), 65–85 (FGLI…FFAS), 95–115 (LFAV…HKLF), and 158–178 (MSYA…MWML). RCK C-terminal domains are found at residues 191-276 (QQHE…VIGQ) and 279-361 (DTSL…VLGN). 6 helical membrane passes run 371-391 (MLPV…PVFV), 393-413 (GFPA…ALIL), 439-459 (IVLF…NTLV), 464-484 (LSWI…VGIL), 493-513 (YLTM…LAFA), and 533-553 (LVMF…WSIG).

This sequence belongs to the AAE transporter (TC 2.A.81) family. YidE subfamily.

Its subcellular location is the cell membrane. The sequence is that of Putative transport protein YidE from Escherichia coli (strain ATCC 8739 / DSM 1576 / NBRC 3972 / NCIMB 8545 / WDCM 00012 / Crooks).